Consider the following 390-residue polypeptide: Caveolae-associated protein 1 (390 aa).

An N-acetylmethionine modification is found at Met1. A disordered region spans residues 1–40 (MEDPTLYIVERPLPGYPDAEAPEPSSAGAQAAEEPSGAGS). The tract at residues 1-98 (MEDPTLYIVE…IQGELSKLGK (98 aa)) is required for homotrimerization and for interaction with CAVIN2 and CAVIN3. Positions 22–40 (PEPSSAGAQAAEEPSGAGS) are enriched in low complexity. Residues Ser36, Ser40, and Ser46 each carry the phosphoserine modification. The tract at residues 52 to 62 (VLVLSLLDKII) is nuclear export signal. The segment at 53 to 75 (LVLSLLDKIIGAVDQIQLTQAQL) is leucine-zipper 1. Residue Lys116 forms a Glycyl lysine isopeptide (Lys-Gly) (interchain with G-Cter in SUMO2) linkage. Ser118 bears the Phosphoserine mark. A Glycyl lysine isopeptide (Lys-Gly) (interchain with G-Cter in SUMO2) cross-link involves residue Lys122. A nuclear localization signal region spans residues 136–152 (KKLEVNEAELLRRRNFK). A Phosphotyrosine modification is found at Tyr156. A Glycyl lysine isopeptide (Lys-Gly) (interchain with G-Cter in SUMO1); alternate cross-link involves residue Lys161. Lys161 participates in a covalent cross-link: Glycyl lysine isopeptide (Lys-Gly) (interchain with G-Cter in SUMO2); alternate. Lys165 is covalently cross-linked (Glycyl lysine isopeptide (Lys-Gly) (interchain with G-Cter in SUMO2)). Residues 166-186 (LSISKSLKESEALPEKEGEEL) form a leucine-zipper 2 region. A phosphoserine mark is found at Ser167 and Ser169. Residue Lys170 forms a Glycyl lysine isopeptide (Lys-Gly) (interchain with G-Cter in SUMO2) linkage. Phosphoserine is present on residues Ser171 and Ser175. The segment covering 172–181 (LKESEALPEK) has biased composition (basic and acidic residues). Residues 172 to 201 (LKESEALPEKEGEELGEGERPEEDAAALEL) are disordered. Positions 182 to 201 (EGEELGEGERPEEDAAALEL) are enriched in acidic residues. Residues 199–282 (LELSSDEAVE…RMNKLGTRLV (84 aa)) adopt a coiled-coil conformation. Phosphoserine is present on residues Ser202 and Ser203. The tract at residues 233–249 (KKAFSKEKMEKTKVRTR) is nuclear localization signal. The interval 257 to 297 (LKTKENLEKTRHTLEKRMNKLGTRLVPAERREKLKTSRDKL) is leucine-zipper 3. The residue at position 300 (Ser300) is a Phosphoserine. The residue at position 302 (Thr302) is a Phosphothreonine. Residue Tyr308 is modified to Phosphotyrosine. Lys326 participates in a covalent cross-link: Glycyl lysine isopeptide (Lys-Gly) (interchain with G-Cter in SUMO2). A disordered region spans residues 344-366 (VGADDDEGGAERGEAGDLRRGSS). Residues 352–365 (GAERGEAGDLRRGS) show a composition bias toward basic and acidic residues. Ser365, Ser366, Ser379, Ser387, and Ser389 each carry phosphoserine.

This sequence belongs to the CAVIN family. As to quaternary structure, component of the CAVIN complex composed of CAVIN1, CAVIN2, CAVIN3 and CAVIN4. Homotrimer. Interacts with TTF1. Interacts with RNA polymerase I subunit POLR1A/RPA1. Binds the 3' end of pre-rRNA. Interacts with transcription factor ZNF148. Interacts with LIPE in the adipocyte cytoplasm. Interacts with CAV1 and CAVIN3. Interacts with CAVIN2. Interacts with CAVIN4 and CAV3. Post-translationally, phosphorylated. Present in active and inactive forms. Changes in phosphorylation pattern may alter activity. Phosphorylation at Tyr-156 is essential for its functionin the regulation of ribosomal transcriptional activity. Five truncated forms are found in the caveolae. These are thought to be the result of proteolysis and may be phosphorylation-dependent. In terms of processing, monoubiquitinated.

It is found in the membrane. It localises to the caveola. The protein localises to the cell membrane. The protein resides in the microsome. Its subcellular location is the endoplasmic reticulum. It is found in the cytoplasm. It localises to the cytosol. The protein localises to the mitochondrion. The protein resides in the nucleus. Its function is as follows. Plays an important role in caveolae formation and organization. Essential for the formation of caveolae in all tissues. Core component of the CAVIN complex which is essential for recruitment of the complex to the caveolae in presence of calveolin-1 (CAV1). Essential for normal oligomerization of CAV1. Promotes ribosomal transcriptional activity in response to metabolic challenges in the adipocytes and plays an important role in the formation of the ribosomal transcriptional loop. Dissociates transcription complexes paused by DNA-bound TTF1, thereby releasing both RNA polymerase I and pre-RNA from the template. The caveolae biogenesis pathway is required for the secretion of proteins such as GASK1A. This chain is Caveolae-associated protein 1, found in Homo sapiens (Human).